We begin with the raw amino-acid sequence, 98 residues long: C-X-C motif chemokine 10 (98 aa).

Residues 1–21 (MNQSAVLIFCLIFLTLNGTQG) form the signal peptide. Arg26 carries the post-translational modification Citrulline. Cystine bridges form between Cys30–Cys57 and Cys32–Cys74.

The protein belongs to the intercrine alpha (chemokine CxC) family. As to quaternary structure, monomer, dimer, and tetramer. Interacts with CXCR3 (via N-terminus).

Its subcellular location is the secreted. Its function is as follows. Pro-inflammatory cytokine that is involved in a wide variety of processes such as chemotaxis, differentiation, and activation of peripheral immune cells, regulation of cell growth, apoptosis and modulation of angiostatic effects. Plays thereby an important role during viral infections by stimulating the activation and migration of immune cells to the infected sites. Mechanistically, binding of CXCL10 to the CXCR3 receptor activates G protein-mediated signaling and results in downstream activation of phospholipase C-dependent pathway, an increase in intracellular calcium production and actin reorganization. In turn, recruitment of activated Th1 lymphocytes occurs at sites of inflammation. Activation of the CXCL10/CXCR3 axis also plays an important role in neurons in response to brain injury for activating microglia, the resident macrophage population of the central nervous system, and directing them to the lesion site. This recruitment is an essential element for neuronal reorganization. This chain is C-X-C motif chemokine 10 (CXCL10), found in Canis lupus familiaris (Dog).